Here is a 399-residue protein sequence, read N- to C-terminus: Sphingosine-1-phosphate phosphatase 2 (399 aa).

4 helical membrane passes run 88–108, 121–141, 160–180, and 185–205; these read YLFQFSAALGQEVFYITFLPF, LIIIWVLVMYIGQVAKDVLKW, YGMPSTHAMAATAIAFTLLIS, and YQYPFVLGLVMAVVFSTLVCL. Residues 136–144 are phosphatase sequence motif I; that stretch reads KDVLKWPRP. Positions 163-166 are phosphatase sequence motif II; sequence PSTH. The Proton donor role is filled by histidine 166. The interval 206–217 is phosphatase sequence motif III; that stretch reads SRLYTGMHTVLD. Histidine 213 acts as the Nucleophile in catalysis. 5 consecutive transmembrane segments (helical) span residues 219 to 239, 247 to 267, 280 to 300, 318 to 338, and 371 to 391; these read LGGVLITALLIVLTYPAWTFI, PLFPVCVIVVPFFLCYNYPVS, ILAAGAGVTIGFWINHFFQLV, TYMLVLGLTKFAVGIVLILLV, and VPYKFVTYTSVGICATTFVPM.

Belongs to the type 2 lipid phosphate phosphatase family. As to expression, expressed strongly in kidney and heart, followed by brain, colon, small intestine and lung. Not detected in skeletal muscle, thymus, spleen, liver, placenta, and peripheral blood leukocytes.

Its subcellular location is the endoplasmic reticulum membrane. The catalysed reaction is sphinganine 1-phosphate + H2O = sphinganine + phosphate. It catalyses the reaction sphing-4-enine 1-phosphate + H2O = sphing-4-enine + phosphate. The enzyme catalyses (4R)-hydroxysphinganine 1-phosphate + H2O = (4R)-hydroxysphinganine + phosphate. Has specific phosphohydrolase activity towards sphingoid base 1-phosphates. Has high phosphohydrolase activity against dihydrosphingosine-1-phosphate and sphingosine-1-phosphate (S1P) in vitro. Sphingosine-1-phosphate phosphatase activity is needed for efficient recycling of sphingosine into the sphingolipid synthesis pathway. May play a role in attenuating intracellular sphingosine 1-phosphate (S1P) signaling. May play a role in pro-inflammatory signaling. Plays a role in the regulation of pancreatic islet beta-cell endoplasmic reticulum stress and proliferation. The polypeptide is Sphingosine-1-phosphate phosphatase 2 (Homo sapiens (Human)).